The chain runs to 298 residues: Small ribosomal subunit biogenesis GTPase RsgA (298 aa).

The region spanning 67 to 228 (TNELIRPPIC…VADTPGFSSL (162 aa)) is the CP-type G domain. 116 to 119 (TKMD) contributes to the GTP binding site. Residue threonine 166 is modified to Phosphothreonine. 171–179 (GQSGVGKSS) contributes to the GTP binding site. Positions 252, 257, 259, and 265 each coordinate Zn(2+).

This sequence belongs to the TRAFAC class YlqF/YawG GTPase family. RsgA subfamily. In terms of assembly, monomer, but able to form dimers. Associates with 30S ribosomal subunit; a phospho-mimetic mutation increases association. Probably binds 16S rRNA. Zn(2+) serves as cofactor. In vitro phosphorylated mostly on Thr (with lower signal on Ser) by PrkC in the presence of poly-L-Lys or myelin basic protein, dephosphorylated by PrpC. Most in vitro phosphorylation occurs on Thr-166, in vivo phosphorylation has not been detected, but it might vary during the cell cycle.

The protein resides in the cytoplasm. In terms of biological role, one of several proteins that assist in the late maturation steps of the functional core of the 30S ribosomal subunit. Helps release RbfA from mature subunits. May play a role in the assembly of ribosomal proteins into the subunit. Circularly permuted GTPase with a low level of activity and slow catalytic turnover, does not act on ATP. GTPase activity is stimulated by the presence of 30S or 70S ribosomes, phosphorylation increases stimulation. Depletion results in increased sensitivity to protein synthesis inhibitors that block the peptide channel or peptidyl transferase center on the ribosome, suggesting this protein functions in conjunction with the ribosome in vivo. Decreasing levels of protein lead to an increase in free 30S and 50S ribosomal subunits and a decrease in assembled 70S ribosomes. Suggested to serve as a specific transcription factor for proteins involved in late stages of peptidoglycan synthesis. The sequence is that of Small ribosomal subunit biogenesis GTPase RsgA from Bacillus subtilis (strain 168).